The sequence spans 1135 residues: Glutamate receptor ionotropic, NMDA 3A (1135 aa).

A signal peptide spans 1–23 (MRRLSLWWLLSRVCLLLPPPCAL). At 24-674 (VLAGVPSSSS…PIGAFMWPLH (651 aa)) the chain is on the extracellular side. A disordered region spans residues 60 to 117 (TAPRAASRAQEGGRAGAQRDDPESGTWRPPAPSQGARWLGSALHGRGPPGSRKLGEGA). N-linked (GlcNAc...) asparagine glycans are attached at residues asparagine 145, asparagine 264, asparagine 275, asparagine 285, asparagine 296, asparagine 300, asparagine 426, asparagine 439, asparagine 549, and asparagine 565. Intrachain disulfides connect cysteine 537-cysteine 575 and cysteine 543-cysteine 576. 3 residues coordinate glycine: serine 631, serine 633, and arginine 638. Residues serine 633 and arginine 638 each coordinate D-serine. Residues 675–694 (WTMWLGIFVALHITAIFLTL) traverse the membrane as a helical segment. Residues 695 to 715 (YEWKSPFGMTPKGRNRNKVFS) are Cytoplasmic-facing. An intramembrane region (discontinuously helical) is located at residues 716–727 (FSSALNVCYALL). Over 728–741 (FGRTAAIKPPKCWT) the chain is Cytoplasmic. The helical transmembrane segment at 742-761 (GRFLMNLWAIFCMFCLSTYT) threads the bilayer. Over 762-932 (ANLAAVMVGE…TLQMGIKHFS (171 aa)) the chain is Extracellular. Residue serine 801 coordinates glycine. The D-serine site is built by serine 801, alanine 802, and aspartate 845. Residue aspartate 845 coordinates glycine. An intrachain disulfide couples cysteine 859 to cysteine 913. Asparagine 886 carries an N-linked (GlcNAc...) asparagine glycan. Residues 933–948 (GLFVLLCIGFGLSILT) form a helical membrane-spanning segment. The Cytoplasmic segment spans residues 949-1135 (TIGEHIVHRL…YQKTNRTCES (187 aa)). Positions 951-987 (GEHIVHRLLLPRIKNKSKLQYWLHTSQRFHRALNTSF) are PPP2CB binding site. Residues 1080–1129 (TTNGKADSLNVTRSSVIQELSELEKQIQVIRQELQLAVSRKTELEEYQKT) adopt a coiled-coil conformation. Residues 1082–1115 (NGKADSLNVTRSSVIQELSELEKQIQVIRQELQL) are GIT1-binding.

Belongs to the glutamate-gated ion channel (TC 1.A.10.1) family. NR3A/GRIN3A subfamily. Heterotetramer. Forms heterotetrameric channels composed of two GluN1/zeta subunits (GRIN1), and two identical GluN3 subunits (GRIN3A or GRIN3B) (in vitro). Can also form heterotetrameric channels that contain at least two GluN1 subunits and at least a combination of one GluN2 and one GluN3 subunits (in vitro). Does not form functional homomeric channels. Found in a complex with GRIN1, GRIN2A or GRIN2B and PPP2CB. Probably interacts with PPP2CB. No complex with PPP2CB is detected when NMDARs are stimulated by NMDA. Interacts (via C-terminus) with GIT1, but not with GRIA1/GluA1, nor with synaptophysin/SYP; this interaction competes with GIT1 interaction with ARHGEF7/beta-PIX. Post-translationally, N-glycosylated. As to expression, isoform 1 and isoform 2 are expressed in olfactory bulb, frontal occipital, entorhinal and pyriform cortices, hippocampus, striatum, thalamus, cerebellum and spinal cord.

It is found in the cell membrane. The protein resides in the postsynaptic cell membrane. The protein localises to the postsynaptic density. It carries out the reaction Ca(2+)(in) = Ca(2+)(out). The enzyme catalyses Na(+)(in) = Na(+)(out). Its activity is regulated as follows. Excitatory glycine receptors are inhibited by D-serine at a concentrion of 10uM. Component of a non-conventional N-methyl-D-aspartate (NMDA) receptors (NMDARs) that function as heterotetrameric, ligand-gated cation channels with low calcium permeability and low voltage-dependent block by Mg(2+). During the development of neural circuits, participates in the synaptic refinement period, restricting spine maturation and growth. Forms glutamatergic receptor complexes with GluN1 and GluN2 subunits which are activated by glycine binding to the GluN1 and GluN3 subunits and L-glutamate binding to GluN2 subunits. Forms excitatory glycinergic receptor complexes with GluN1 alone which are activated by glycine binding to the GluN1 and GluN3 subunits. GluN3A subunit also binds D-serine. Each GluN3 subunit confers differential attributes to channel properties, including activation, deactivation and desensitization kinetics, pH sensitivity, Ca2(+) permeability, and binding to allosteric modulators. By competing with GIT1 interaction with ARHGEF7/beta-PIX, may reduce GIT1/ARHGEF7-regulated local activation of RAC1, hence affecting signaling and limiting the maturation and growth of inactive synapses. This is Glutamate receptor ionotropic, NMDA 3A from Rattus norvegicus (Rat).